Consider the following 29-residue polypeptide: Toxin Bcg III 15.67 (29 aa).

Residues 2-29 (QGTACTGEHAHSFCLNGGTCRHIQQLGE) form the EGF-like domain. Cysteines 6 and 21 form a disulfide.

Its subcellular location is the secreted. The protein localises to the nematocyst. Its function is as follows. Has both toxic and EGF activity. In Bunodosoma cangicum (Sea anemone), this protein is Toxin Bcg III 15.67.